We begin with the raw amino-acid sequence, 369 residues long: Molybdenum import ATP-binding protein ModC (369 aa).

An ABC transporter domain is found at 3-246 (TRPEQASKDT…LDLPLAHGDS (244 aa)). Residue 44–51 (GPSGSGKT) coordinates ATP. A Mop domain is found at 305-369 (DTSILNILPA…AQIKGVAILG (65 aa)).

This sequence belongs to the ABC transporter superfamily. Molybdate importer (TC 3.A.1.8) family. In terms of assembly, the complex is composed of two ATP-binding proteins (ModC), two transmembrane proteins (ModB) and a solute-binding protein (ModA).

It is found in the cell inner membrane. It carries out the reaction molybdate(out) + ATP + H2O = molybdate(in) + ADP + phosphate + H(+). In terms of biological role, part of the ABC transporter complex ModABC involved in molybdenum import. Responsible for energy coupling to the transport system. The sequence is that of Molybdenum import ATP-binding protein ModC from Albidiferax ferrireducens (strain ATCC BAA-621 / DSM 15236 / T118) (Rhodoferax ferrireducens).